A 358-amino-acid chain; its full sequence is Magnesium-protoporphyrin IX monomethyl ester [oxidative] cyclase 2 (358 aa).

This sequence belongs to the AcsF family. Fe cation is required as a cofactor.

It carries out the reaction Mg-protoporphyrin IX 13-monomethyl ester + 3 NADPH + 3 O2 + 2 H(+) = 3,8-divinyl protochlorophyllide a + 3 NADP(+) + 5 H2O. It functions in the pathway porphyrin-containing compound metabolism; chlorophyll biosynthesis (light-independent). Functionally, catalyzes the formation of the isocyclic ring in chlorophyll biosynthesis. Mediates the cyclase reaction, which results in the formation of divinylprotochlorophyllide (Pchlide) characteristic of all chlorophylls from magnesium-protoporphyrin IX 13-monomethyl ester (MgPMME). In Nostoc sp. (strain PCC 7120 / SAG 25.82 / UTEX 2576), this protein is Magnesium-protoporphyrin IX monomethyl ester [oxidative] cyclase 2.